The primary structure comprises 134 residues: Small ribosomal subunit protein uS8c (134 aa).

Belongs to the universal ribosomal protein uS8 family. Part of the 30S ribosomal subunit.

It is found in the plastid. Its subcellular location is the chloroplast. Its function is as follows. One of the primary rRNA binding proteins, it binds directly to 16S rRNA central domain where it helps coordinate assembly of the platform of the 30S subunit. The chain is Small ribosomal subunit protein uS8c (rps8) from Ipomoea purpurea (Common morning glory).